Consider the following 94-residue polypeptide: Small ribosomal subunit protein bS20 (94 aa).

It belongs to the bacterial ribosomal protein bS20 family.

Its function is as follows. Binds directly to 16S ribosomal RNA. The sequence is that of Small ribosomal subunit protein bS20 from Aquifex aeolicus (strain VF5).